The chain runs to 137 residues: Methylglyoxal synthase (137 aa).

One can recognise an MGS-like domain in the interval 1–137 (MNIALVAHDQ…EVRKSKSQRI (137 aa)). Residues His8, Lys12, 34–37 (TGTT), and 54–55 (SG) each bind substrate. Asp60 functions as the Proton donor/acceptor in the catalytic mechanism. Residue His87 participates in substrate binding.

It belongs to the methylglyoxal synthase family.

It carries out the reaction dihydroxyacetone phosphate = methylglyoxal + phosphate. Functionally, catalyzes the formation of methylglyoxal from dihydroxyacetone phosphate. The sequence is that of Methylglyoxal synthase from Clostridioides difficile (strain 630) (Peptoclostridium difficile).